Consider the following 337-residue polypeptide: Phosphoribosylformylglycinamidine cyclo-ligase (337 aa).

The protein belongs to the AIR synthase family.

It is found in the cytoplasm. The catalysed reaction is 2-formamido-N(1)-(5-O-phospho-beta-D-ribosyl)acetamidine + ATP = 5-amino-1-(5-phospho-beta-D-ribosyl)imidazole + ADP + phosphate + H(+). The protein operates within purine metabolism; IMP biosynthesis via de novo pathway; 5-amino-1-(5-phospho-D-ribosyl)imidazole from N(2)-formyl-N(1)-(5-phospho-D-ribosyl)glycinamide: step 2/2. The protein is Phosphoribosylformylglycinamidine cyclo-ligase of Gloeobacter violaceus (strain ATCC 29082 / PCC 7421).